Here is an 84-residue protein sequence, read N- to C-terminus: UPF0457 protein BT9727_2307 (84 aa).

The protein belongs to the UPF0457 family.

In Bacillus thuringiensis subsp. konkukian (strain 97-27), this protein is UPF0457 protein BT9727_2307.